Reading from the N-terminus, the 239-residue chain is Uridylate kinase (239 aa).

Lys-10–Gly-13 is an ATP binding site. Positions Gly-18 to Gly-23 are involved in allosteric activation by GTP. Position 52 (Gly-52) interacts with UMP. Gly-53 and Arg-57 together coordinate ATP. Residues Asp-72 and Thr-133–Thr-140 contribute to the UMP site. Positions 160, 166, and 169 each coordinate ATP.

It belongs to the UMP kinase family. Homohexamer.

The protein resides in the cytoplasm. It catalyses the reaction UMP + ATP = UDP + ADP. Its pathway is pyrimidine metabolism; CTP biosynthesis via de novo pathway; UDP from UMP (UMPK route): step 1/1. With respect to regulation, allosterically activated by GTP. Inhibited by UTP. In terms of biological role, catalyzes the reversible phosphorylation of UMP to UDP. This Chlorobaculum tepidum (strain ATCC 49652 / DSM 12025 / NBRC 103806 / TLS) (Chlorobium tepidum) protein is Uridylate kinase.